A 934-amino-acid chain; its full sequence is Aconitate hydratase A (934 aa).

Positions 398-454 (EPVDESLPAKRMDSEGAVQKEGEDVAGYNSSRAGHGESAAEGAAGRQSNPVVVSSPN) are disordered. The segment covering 404–420 (LPAKRMDSEGAVQKEGE) has biased composition (basic and acidic residues). The segment covering 427-445 (SSRAGHGESAAEGAAGRQS) has biased composition (low complexity). C473, C539, and C542 together coordinate [4Fe-4S] cluster.

The protein belongs to the aconitase/IPM isomerase family. In terms of assembly, monomer. [4Fe-4S] cluster serves as cofactor.

The catalysed reaction is citrate = D-threo-isocitrate. It carries out the reaction (2S,3R)-3-hydroxybutane-1,2,3-tricarboxylate = 2-methyl-cis-aconitate + H2O. It functions in the pathway carbohydrate metabolism; tricarboxylic acid cycle; isocitrate from oxaloacetate: step 2/2. It participates in organic acid metabolism; propanoate degradation. Involved in the catabolism of short chain fatty acids (SCFA) via the tricarboxylic acid (TCA)(acetyl degradation route) and probably via the 2-methylcitrate cycle I (propionate degradation route). Catalyzes the reversible isomerization of citrate to isocitrate via cis-aconitate. Could catalyze the hydration of 2-methyl-cis-aconitate to yield (2R,3S)-2-methylisocitrate. The apo form of AcnA functions as a RNA-binding regulatory protein. The chain is Aconitate hydratase A (acn) from Corynebacterium diphtheriae (strain ATCC 700971 / NCTC 13129 / Biotype gravis).